The sequence spans 79 residues: Dolichyl-diphosphooligosaccharide--protein glycosyltransferase subunit TMEM258 (79 aa).

M1 bears the N-acetylmethionine mark. Over 1-16 (MELEAMSRYTSPVNPA) the chain is Lumenal. Residues 17 to 37 (VFPHLTVVLLAIGMFFTAWFF) form a helical membrane-spanning segment. Residues 38-54 (VYEVTSTKYTRDICKEL) lie on the Cytoplasmic side of the membrane. A helical membrane pass occupies residues 55–75 (LISLVASLFMGFGVLFLLLWV). The Lumenal segment spans residues 76–79 (GIYV).

The protein belongs to the OST5 family. As to quaternary structure, component of the oligosaccharyltransferase (OST) complex. OST exists in two different complex forms which contain common core subunits RPN1, RPN2, OST48, OST4, DAD1 and TMEM258, either STT3A or STT3B as catalytic subunits, and form-specific accessory subunits. STT3A complex assembly occurs through the formation of 3 subcomplexes. Subcomplex 1 contains RPN1 and TMEM258, subcomplex 2 contains the STT3A-specific subunits STT3A, DC2/OSTC, and KCP2 as well as the core subunit OST4, and subcomplex 3 contains RPN2, DAD1, and OST48. The STT3A complex can form stable complexes with the Sec61 complex or with both the Sec61 and TRAP complexes.

Its subcellular location is the membrane. The protein resides in the endoplasmic reticulum. It is found in the cytoplasm. It participates in protein modification; protein glycosylation. In terms of biological role, subunit of the oligosaccharyl transferase (OST) complex that catalyzes the initial transfer of a defined glycan (Glc(3)Man(9)GlcNAc(2) in eukaryotes) from the lipid carrier dolichol-pyrophosphate to an asparagine residue within an Asn-X-Ser/Thr consensus motif in nascent polypeptide chains, the first step in protein N-glycosylation. N-glycosylation occurs cotranslationally and the complex associates with the Sec61 complex at the channel-forming translocon complex that mediates protein translocation across the endoplasmic reticulum (ER). All subunits are required for a maximal enzyme activity. The protein is Dolichyl-diphosphooligosaccharide--protein glycosyltransferase subunit TMEM258 of Canis lupus familiaris (Dog).